Consider the following 447-residue polypeptide: Phospholipase A(1) LCAT3 (447 aa).

Residue Ser-177 is the Acyl-ester intermediate of the active site. Residues Asp-384 and His-409 each act as charge relay system in the active site.

It belongs to the AB hydrolase superfamily. Lipase family.

It localises to the microsome membrane. It catalyses the reaction a 1,2-diacyl-sn-glycero-3-phosphocholine + H2O = a 2-acyl-sn-glycero-3-phosphocholine + a fatty acid + H(+). Hydrolyzes the sn-1 acylester bond of phospholipids. Phosphatidylcholine, phosphatidylethanolamine and phosphatidic acid can be used as substrates. Weak activity with lysophosphatidylcholine and no activity with tripalmitoylglycerol and cholesteryl oleate. Seems to have a preference for unsaturated fatty acids at the sn-1 position. The sequence is that of Phospholipase A(1) LCAT3 (LCAT3) from Arabidopsis thaliana (Mouse-ear cress).